Here is a 122-residue protein sequence, read N- to C-terminus: Large ribosomal subunit protein bL12 (122 aa).

The protein belongs to the bacterial ribosomal protein bL12 family. Homodimer. Part of the ribosomal stalk of the 50S ribosomal subunit. Forms a multimeric L10(L12)X complex, where L10 forms an elongated spine to which 2 to 4 L12 dimers bind in a sequential fashion. Binds GTP-bound translation factors.

Forms part of the ribosomal stalk which helps the ribosome interact with GTP-bound translation factors. Is thus essential for accurate translation. The polypeptide is Large ribosomal subunit protein bL12 (Stenotrophomonas maltophilia (strain R551-3)).